The primary structure comprises 299 residues: MKTKLIVVAGPTAVGKTALGIELAERFNGEIISGDSQQVYRQLNIGTAKATPEEQAAAVHHLIDVRDVDESYSAYDFVTEAQAAITDIVSRGKLPIIVGGTGLYLQSLLEGYHLGGKVDQNQVLAYRSELEQLSDQQLFEKIDSLGIEIKEINRRRAIRALELYRFSDNLENTETCYEPFIIGLDDERSLIYDRINTRVDKMVELGLLEEAKWLYDNFPEAQSARGIGYKELFPYFSGEQTLDEALEKLKQNTRRFAKRQLTWFRNRMTVSFYQISSPEYPENVIQDLAIFLNEEEGEK.

10-17 (GPTAVGKT) is an ATP binding site. A substrate-binding site is contributed by 12-17 (TAVGKT). Residues 35–38 (DSQQ) are interaction with substrate tRNA.

This sequence belongs to the IPP transferase family. Monomer. It depends on Mg(2+) as a cofactor.

It carries out the reaction adenosine(37) in tRNA + dimethylallyl diphosphate = N(6)-dimethylallyladenosine(37) in tRNA + diphosphate. Its function is as follows. Catalyzes the transfer of a dimethylallyl group onto the adenine at position 37 in tRNAs that read codons beginning with uridine, leading to the formation of N6-(dimethylallyl)adenosine (i(6)A). This Streptococcus thermophilus (strain ATCC BAA-250 / LMG 18311) protein is tRNA dimethylallyltransferase.